The sequence spans 245 residues: tRNA (guanine-N(1)-)-methyltransferase (245 aa).

S-adenosyl-L-methionine is bound by residues Gly112 and Ile132 to Leu137.

Belongs to the RNA methyltransferase TrmD family. In terms of assembly, homodimer.

The protein localises to the cytoplasm. The enzyme catalyses guanosine(37) in tRNA + S-adenosyl-L-methionine = N(1)-methylguanosine(37) in tRNA + S-adenosyl-L-homocysteine + H(+). Functionally, specifically methylates guanosine-37 in various tRNAs. The protein is tRNA (guanine-N(1)-)-methyltransferase of Geobacter sulfurreducens (strain ATCC 51573 / DSM 12127 / PCA).